A 423-amino-acid polypeptide reads, in one-letter code: MNTLIQEAIKLVEAGETEKGLNTLSKAEKQLHDEDKAIAAQLYYEWGDVEKAISLISDLHDLYPNETELTNFYAELLIDIDEEEKALAVLETIPETDPSYPESLLLMADLYQMQGLFEVSEQKLFQAKSILDNEPVIDFALGELYFAQGAYAKAVQYFKTTAEEQSEIGGVNVHQRLAESLSASGEFEDAIPWYEKAVDENPDPNTIFGYGFTALQAGLVKTAIKQLSDLKELDPSYTSLYMPLSKSYEAEGMYEEALKTAKEGIRYDEYNKELFLYAAKMALKIGKSEEGKKLLQEALALDPGFVEALHTLLAVYHKEEDYDQIIDLIQEVRSYGEEDPKYNWYLASAYTELEQYEEAKQSFEAAYLHYREDRDFLYEYASFLLEEGLQKEALPLLKKVLEMDGANEELEETILRIEDEFSR.

9 TPR repeats span residues Asp33–Glu66, Thr67–Tyr100, Pro135–Ile168, Val171–Pro204, Thr238–Asn271, Lys272–Phe305, Val306–Asp339, Pro340–Asp373, and Arg374–Asn407.

In terms of assembly, interacts with the RNA polymerase core.

This Bacillus subtilis (strain 168) protein is TPR repeat-containing protein YpiA (ypiA).